The primary structure comprises 913 residues: Pentatricopeptide repeat-containing protein At1g10270 (913 aa).

Residues 34-138 are disordered; that stretch reads SLSPANEDPE…PNAPRLPDST (105 aa). A compositionally biased stretch (polar residues) spans 64-73; that stretch reads DPSQFQIPQN. Residues 74–84 are compositionally biased toward pro residues; that stretch reads HTPPIPYPPIP. Positions 99–108 match the Nuclear localization signal motif; the sequence is ERRRRKRRLR. Over residues 108–130 the composition is skewed to basic and acidic residues; the sequence is RIEPPLHALRRDPSAPPPKRDPN. The interval 134–167 is leucine-zipper; the sequence is LPDSTSALVGQRLNLHNRVQSLIRASDLDAASKL. 11 PPR repeats span residues 179-214, 215-250, 251-285, 286-316, 321-355, 356-390, 396-426, 435-469, 470-504, 505-539, and 540-574; these read TVFTCNAIIAAMYRAKRYSESISLFQYFFKQSNIVP, NVVSYNQIINAHCDEGNVDEALEVYRHILANAPFAP, SSVTYRHLTKGLVQAGRIGDAASLLREMLSKGQAA, DSTVYNNLIRGYLDLGDFDKAVEFFDELKSK, DGIVNATFMEYWFEKGNDKEAMESYRSLLDKKFRM, HPPTGNVLLEVFLKFGKKDEAWALFNEMLDNHAPP, NSDTVGIMVNECFKMGEFSEAINTFKKVGSK, DYLGYCNIVTRFCEQGMLTEAERFFAEGVSRSLPA, DAPSHRAMIDAYLKAERIDDAVKMLDRMVDVNLRV, VADFGARVFGELIKNGKLTESAEVLTKMGEREPKP, and DPSIYDVVVRGLCDGDALDQAKDIVGEMIRHNVGV. A disordered region spans residues 607–913; that stretch reads RNAGQSGNTP…QEKKVVELRN (307 aa). Polar residues predominate over residues 639–649; sequence WTSQGVVHSNS. Composition is skewed to low complexity over residues 650–666 and 673–690; these read GWANGTAGQTAGGAYKA and SWSNTSDNQQQQSWSNQT. Residues 674-858 are 14 X 11 AA approximate tandem repeats of W-x(2)-Q-x(4)-Q-x(2); it reads WSNTSDNQQQ…TAQQQWSNQT (185 aa). Polar residues predominate over residues 691–700; it reads AGQQPPSWSR. Positions 706 to 727 are enriched in low complexity; sequence QQQQSWSQQSGWSSPSGHQQSW. The span at 728-761 shows a compositional bias: polar residues; it reads TNQTAGQQQPWANQTPGQQQQWANQTPGQQQQLA. Residues 762–791 show a composition bias toward low complexity; sequence NQTPGQQQQWANQTPGQQQQWANQNNGHQQ. Residues 792-814 are compositionally biased toward polar residues; sequence PWANQNTGHQQSWANQTPSQQQP. The span at 815–845 shows a compositional bias: low complexity; sequence WANQTTGQQQGWGNQTTGQQQQWANQTAGQQ. Polar residues-rich tracts occupy residues 846 to 867 and 875 to 894; these read SGWTAQQQWSNQTASHQQSQWL and ANQTPWSNSVDSHLPQQQEP. Residues 899 to 913 are compositionally biased toward basic and acidic residues; the sequence is ECQETQEKKVVELRN.

Belongs to the PPR family. P subfamily. Interacts with RPB36B through its WQQ domain. Ubiquitous but preferentially expressed in gametophytes and young embryos.

It localises to the nucleus. Its function is as follows. May function as a transcriptional regulator essential for early embryogenesis. This chain is Pentatricopeptide repeat-containing protein At1g10270 (GRP23), found in Arabidopsis thaliana (Mouse-ear cress).